The primary structure comprises 664 residues: DNA mismatch repair protein MutL (664 aa).

The disordered stretch occupies residues 382 to 447 (RKAGQEQQLQ…YGEPAPSKQQ (66 aa)). Residues 427-436 (RHTTSSNQSE) are compositionally biased toward polar residues.

It belongs to the DNA mismatch repair MutL/HexB family.

Functionally, this protein is involved in the repair of mismatches in DNA. It is required for dam-dependent methyl-directed DNA mismatch repair. May act as a 'molecular matchmaker', a protein that promotes the formation of a stable complex between two or more DNA-binding proteins in an ATP-dependent manner without itself being part of a final effector complex. The polypeptide is DNA mismatch repair protein MutL (Vibrio vulnificus (strain CMCP6)).